The primary structure comprises 246 residues: Envelope glycoprotein L (246 aa).

Residues 1–19 (MKTNIFFIFLISILNQIYA) form the signal peptide. Positions 29–235 (LEQECIKNIL…EKYNEVLPFR (207 aa)) constitute a gL betaherpesvirus-type domain. A disulfide bond links cysteine 134 and cysteine 139.

This sequence belongs to the herpesviridae glycoprotein L (gL) family. Betaherpesvirinae gL subfamily. Interacts with glycoprotein H (gH); this interaction is necessary for the correct processing and cell surface expression of gH.

It localises to the virion membrane. It is found in the host cell membrane. Its subcellular location is the host Golgi apparatus. The protein resides in the host trans-Golgi network. In terms of biological role, the heterodimer glycoprotein H-glycoprotein L is required for the fusion of viral and plasma membranes leading to virus entry into the host cell. Acts as a functional inhibitor of gH and maintains gH in an inhibited form. Upon binding to host integrins, gL dissociates from gH leading to activation of the viral fusion glycoproteins gB and gH. In Homo sapiens (Human), this protein is Envelope glycoprotein L.